The primary structure comprises 282 residues: 2-dehydro-3-deoxyphosphooctonate aldolase (282 aa).

The protein belongs to the KdsA family.

It localises to the cytoplasm. It carries out the reaction D-arabinose 5-phosphate + phosphoenolpyruvate + H2O = 3-deoxy-alpha-D-manno-2-octulosonate-8-phosphate + phosphate. Its pathway is carbohydrate biosynthesis; 3-deoxy-D-manno-octulosonate biosynthesis; 3-deoxy-D-manno-octulosonate from D-ribulose 5-phosphate: step 2/3. The protein operates within bacterial outer membrane biogenesis; lipopolysaccharide biosynthesis. This chain is 2-dehydro-3-deoxyphosphooctonate aldolase, found in Shewanella sp. (strain MR-4).